The chain runs to 196 residues: ATP-dependent Clp protease proteolytic subunit (196 aa).

Residue Ser-99 is the Nucleophile of the active site. His-124 is a catalytic residue.

It belongs to the peptidase S14 family. Fourteen ClpP subunits assemble into 2 heptameric rings which stack back to back to give a disk-like structure with a central cavity, resembling the structure of eukaryotic proteasomes.

It localises to the cytoplasm. The catalysed reaction is Hydrolysis of proteins to small peptides in the presence of ATP and magnesium. alpha-casein is the usual test substrate. In the absence of ATP, only oligopeptides shorter than five residues are hydrolyzed (such as succinyl-Leu-Tyr-|-NHMec, and Leu-Tyr-Leu-|-Tyr-Trp, in which cleavage of the -Tyr-|-Leu- and -Tyr-|-Trp bonds also occurs).. Functionally, cleaves peptides in various proteins in a process that requires ATP hydrolysis. Has a chymotrypsin-like activity. Plays a major role in the degradation of misfolded proteins. This Campylobacter lari (strain RM2100 / D67 / ATCC BAA-1060) protein is ATP-dependent Clp protease proteolytic subunit.